The sequence spans 347 residues: Transcription elongation factor A protein 3 (347 aa).

Residues 5-82 (EELLRIAKKL…KNWKRLLDSP (78 aa)) form the TFIIS N-terminal domain. Over residues 83–100 (RTTKGEREEREKAKKEKG) the composition is skewed to basic and acidic residues. A disordered region spans residues 83 to 168 (RTTKGEREER…TTPSSPSTPT (86 aa)). Ser-113 is modified (phosphoserine). Residues 119–131 (GGGEPKTRRDSVD) show a composition bias toward basic and acidic residues. 2 stretches are compositionally biased toward low complexity: residues 132-142 (SRSSTTSSPKR) and 157-168 (TPTTPSSPSTPT). Phosphoserine is present on Ser-139. Residues 186–302 (VRDKCVEMLS…EHQMAKTGGT (117 aa)) form the TFIIS central domain. The TFIIS-type zinc finger occupies 305 to 345 (DLLRCSKCKKKNCTYNQVQTRSADEPMTTFVLCNECGNRWK). Cys-309, Cys-312, Cys-337, and Cys-340 together coordinate Zn(2+).

This sequence belongs to the TFS-II family. As to expression, liver, kidney and heart.

It localises to the nucleus. Its function is as follows. Necessary for efficient RNA polymerase II transcription elongation past template-encoded arresting sites. The arresting sites in DNA have the property of trapping a certain fraction of elongating RNA polymerases that pass through, resulting in locked ternary complexes. Cleavage of the nascent transcript by S-II allows the resumption of elongation from the new 3'-terminus. This Mus musculus (Mouse) protein is Transcription elongation factor A protein 3 (Tcea3).